The primary structure comprises 118 residues: Aspartate 1-decarboxylase (118 aa).

S25 acts as the Schiff-base intermediate with substrate; via pyruvic acid in catalysis. S25 bears the Pyruvic acid (Ser) mark. T57 provides a ligand contact to substrate. Catalysis depends on Y58, which acts as the Proton donor. Position 73–75 (73–75 (GAA)) interacts with substrate.

Belongs to the PanD family. Heterooctamer of four alpha and four beta subunits. The cofactor is pyruvate. Post-translationally, is synthesized initially as an inactive proenzyme, which is activated by self-cleavage at a specific serine bond to produce a beta-subunit with a hydroxyl group at its C-terminus and an alpha-subunit with a pyruvoyl group at its N-terminus.

The protein localises to the cytoplasm. The catalysed reaction is L-aspartate + H(+) = beta-alanine + CO2. It participates in cofactor biosynthesis; (R)-pantothenate biosynthesis; beta-alanine from L-aspartate: step 1/1. Its function is as follows. Catalyzes the pyruvoyl-dependent decarboxylation of aspartate to produce beta-alanine. In Caulobacter vibrioides (strain ATCC 19089 / CIP 103742 / CB 15) (Caulobacter crescentus), this protein is Aspartate 1-decarboxylase.